The primary structure comprises 126 residues: Topoisomerase I damage affected protein 2 (126 aa).

Ser2 is subject to N-acetylserine.

Belongs to the TDA2 family.

The protein localises to the cytoplasm. Its subcellular location is the cell projection. The sequence is that of Topoisomerase I damage affected protein 2 (TDA2) from Saccharomyces cerevisiae (strain JAY291) (Baker's yeast).